The following is a 920-amino-acid chain: Alpha-L-rhamnosidase (920 aa).

A signal peptide spans 1 to 19 (MCVVRTFWFAVLTVIFAVS). Cysteine 20 carries N-palmitoyl cysteine lipidation. Cysteine 20 is lipidated: S-diacylglycerol cysteine. Residues aspartate 500, 504-506 (RDE), aspartate 513, and tryptophan 565 contribute to the alpha-L-rhamnose site. Glutamate 506 acts as the Proton donor in catalysis. Glutamate 779 serves as the catalytic Proton acceptor. Histidine 800 is an alpha-L-rhamnose binding site.

The protein belongs to the glycosyl hydrolase 78 family.

It localises to the cell membrane. The catalysed reaction is Hydrolysis of terminal non-reducing alpha-L-rhamnose residues in alpha-L-rhamnosides.. Alpha-L-rhamnosidase involved in ulvan degradation. Ulvan is the main polysaccharide component of the Ulvales (green seaweed) cell wall. It is composed of disaccharide building blocks comprising 3-sulfated rhamnose (Rha3S) linked to D-glucuronic acid (GlcA), L-iduronic acid (IduA), or D-xylose (Xyl). The enzyme is able to degrade p-nitrophenyl-alpha-L-rhamnopyranoside (PNP-Rha) in vitro. Incubating the enzyme with the products obtained after degradation with ulvan lyase and beta-glucuronyl hydrolase (i.e. the trisaccharides beta-alpha-L-Rha3S-IduA-Rha3S and beta-alpha-L-Rha3S-GlcA-Rha3S) showed no degradation, suggesting that the enzyme is active on neutral rhamnose and that desulfation of the oligosaccharide must be achieved before cleavage of rhamnose. The polypeptide is Alpha-L-rhamnosidase (Alteromonas sp. (strain LOR)).